The following is a 432-amino-acid chain: MPDYVNWLRHASPYINAHRDCTFVVMLPGDGVEHPNFGNIVHDLVLLHSLGVRLVLVHGSRPQIESRLADRGLTPHYHRGMRITDAATLDCVIDAVGALRLAIEARLSMDIAASPMQGSRLRVASGNLVTARPIGVLEGVDYHHTGEVRRVDRKGISRLLDERSIVLLSPLGYSPTGEIFNLACEDVATRAAIELGADKLLLFGAEPGLLDADGRLVRELRPQQVAPHLQRLGSDYQGELLDAAAEACKGGVARSHIVSYAEDGALLTELFTRGGGGTLVSQEQFEVVREATIEDVGGLLELISPLEEQGILVRRSREVLEREIEQFSVVEREGMIIACAALYPIADSEAGELACLAVNPEYRHGGRGDELLERIESRARQMGLSTLFVLTTRTAHWFRERGFAPSGVERLPAARASLYNYQRNSKIFEKPL.

The 147-residue stretch at 286 to 432 folds into the N-acetyltransferase domain; sequence EVVREATIED…RNSKIFEKPL (147 aa).

This sequence belongs to the acetyltransferase family. ArgA subfamily.

It is found in the cytoplasm. It catalyses the reaction L-glutamate + acetyl-CoA = N-acetyl-L-glutamate + CoA + H(+). It participates in amino-acid biosynthesis; L-arginine biosynthesis; N(2)-acetyl-L-ornithine from L-glutamate: step 1/4. In Pseudomonas putida (strain ATCC 47054 / DSM 6125 / CFBP 8728 / NCIMB 11950 / KT2440), this protein is Amino-acid acetyltransferase (argA).